A 99-amino-acid polypeptide reads, in one-letter code: Cell division protein FtsB (99 aa).

The Cytoplasmic segment spans residues 1-3 (MKF). A helical transmembrane segment spans residues 4–21 (FVIALIVLLGLLQYRLWS). Over 22–99 (GDNSLPEYFV…GDRSVSSPSQ (78 aa)) the chain is Periplasmic. The stretch at 31–73 (VLQKQIAAQQDGNAKLNERNQVLKEEIIDLKSGTEAIEERARN) forms a coiled coil.

Belongs to the FtsB family. As to quaternary structure, part of a complex composed of FtsB, FtsL and FtsQ.

Its subcellular location is the cell inner membrane. In terms of biological role, essential cell division protein. May link together the upstream cell division proteins, which are predominantly cytoplasmic, with the downstream cell division proteins, which are predominantly periplasmic. In Shewanella sp. (strain MR-4), this protein is Cell division protein FtsB.